The following is a 425-amino-acid chain: Serine--tRNA ligase (425 aa).

Thr-233–Glu-235 provides a ligand contact to L-serine. Residue Arg-264–Glu-266 coordinates ATP. Glu-287 provides a ligand contact to L-serine. ATP is bound at residue Glu-351–Ser-354. Ser-387 is an L-serine binding site.

This sequence belongs to the class-II aminoacyl-tRNA synthetase family. Type-1 seryl-tRNA synthetase subfamily. In terms of assembly, homodimer. The tRNA molecule binds across the dimer.

The protein resides in the cytoplasm. It carries out the reaction tRNA(Ser) + L-serine + ATP = L-seryl-tRNA(Ser) + AMP + diphosphate + H(+). The enzyme catalyses tRNA(Sec) + L-serine + ATP = L-seryl-tRNA(Sec) + AMP + diphosphate + H(+). It functions in the pathway aminoacyl-tRNA biosynthesis; selenocysteinyl-tRNA(Sec) biosynthesis; L-seryl-tRNA(Sec) from L-serine and tRNA(Sec): step 1/1. In terms of biological role, catalyzes the attachment of serine to tRNA(Ser). Is also able to aminoacylate tRNA(Sec) with serine, to form the misacylated tRNA L-seryl-tRNA(Sec), which will be further converted into selenocysteinyl-tRNA(Sec). The sequence is that of Serine--tRNA ligase from Clostridium perfringens (strain 13 / Type A).